The following is a 723-amino-acid chain: Probable G-protein coupled receptor 149 (723 aa).

Residues 1–31 (MSVMPSNLSLNGTSFFAENHSIMDKPNEQRT) are Extracellular-facing. 3 N-linked (GlcNAc...) asparagine glycosylation sites follow: Asn-7, Asn-11, and Asn-19. The chain crosses the membrane as a helical span at residues 32–52 (LNVFLFCSTFIIAFTVLLGSI). The Cytoplasmic segment spans residues 53–69 (YSLVSLLKLQNKSTISM). The helical transmembrane segment at 70–90 (IVTSLSIDDLISIVPVIIFML) threads the bilayer. Topologically, residues 91–106 (TQWSSDALPQPLCTTS) are extracellular. A disulfide bond links Cys-103 and Cys-181. Residues 107 to 127 (ALIYLFQGISSNLKGSLIVSY) traverse the membrane as a helical segment. At 128 to 148 (NFYSINKTETMNCSASKRRVS) the chain is on the cytoplasmic side. The chain crosses the membrane as a helical span at residues 149-169 (MVWAILSIWIVSLLICILPLC). Residues 170-188 (GWGKYIPTTWGCFTDHASS) are Extracellular-facing. Residues 189–209 (YILFLFIVYSLCFCLLTVLSV) traverse the membrane as a helical segment. The Cytoplasmic segment spans residues 210–306 (PLTYQLLCSD…SFTVGFAQKR (97 aa)). The chain crosses the membrane as a helical span at residues 307–327 (FSLILALTKVILWLPMMIQMV). Over 328-338 (VQHITGYQSFS) the chain is Extracellular. A helical transmembrane segment spans residues 339-359 (FETLSFLLTLLAATVTPVFVL). At 360 to 723 (SEHWIHLPCG…RKREEDGNSN (364 aa)) the chain is on the cytoplasmic side. Residues 451–513 (TTDSARPGPA…ERRLSHEEGH (63 aa)) form a disordered region. Basic and acidic residues predominate over residues 501–513 (EGPERRLSHEEGH).

Belongs to the G-protein coupled receptor 1 family. In terms of tissue distribution, specific expression in peripheral nervous system, including nerve growth factor-dependent sensory and sympathetic neurons, as well as enteric neurons.

Its subcellular location is the cell membrane. Functionally, orphan receptor. The protein is Probable G-protein coupled receptor 149 (GPR149) of Gallus gallus (Chicken).